The chain runs to 510 residues: Myosin-binding protein C, cardiac-type (510 aa).

Ig-like C2-type domains lie at 177–269 (KKST…VKEP), 270–347 (PYSS…TVKT), and 378–438 (RDQA…SFIP).

This sequence belongs to the immunoglobulin superfamily. MyBP family. As to expression, heart.

Its function is as follows. Thick filament-associated protein located in the crossbridge region of vertebrate striated muscle a bands. In vitro it binds MHC, F-actin and native thin filaments, and modifies the activity of actin-activated myosin ATPase. It may modulate muscle contraction or may play a more structural role. The protein is Myosin-binding protein C, cardiac-type of Ambystoma mexicanum (Axolotl).